The primary structure comprises 400 residues: Dual specificity mitogen-activated protein kinase kinase 2 (400 aa).

Methionine 1 carries the N-acetylmethionine modification. Serine 23 is subject to Phosphoserine. The 298-residue stretch at 72–369 folds into the Protein kinase domain; the sequence is FERISELGAG…LKLLTNHAFI (298 aa). ATP-binding positions include 78 to 86 and lysine 101; that span reads LGAGNGGVV. Residue aspartate 194 is the Proton acceptor of the active site. Phosphoserine; by RAF occurs at positions 222 and 226. A disordered region spans residues 282-310; sequence PVVDGADGEPHSVSPRPRPPGRPISGHGM. Residues serine 293, serine 295, and serine 306 each carry the phosphoserine modification. Threonine 394 and threonine 396 each carry phosphothreonine.

The protein belongs to the protein kinase superfamily. STE Ser/Thr protein kinase family. MAP kinase kinase subfamily. Interacts with MORG1. Interacts with SGK1. Interacts with KSR1. Interacts with KSR1 and BRAF; the interaction with KSR1 mediates KSR1-BRAF dimerization. Interacts with GLS. Requires Mg(2+) as cofactor. Post-translationally, MAPKK is itself dependent on Ser/Thr phosphorylation for activity catalyzed by MAP kinase kinase kinases (RAF or MEKK1). Phosphorylated by MAP2K1/MEK1. In terms of tissue distribution, expressed abundantly in the adult brain and muscle.

It localises to the cytoplasm. Its subcellular location is the membrane. It carries out the reaction L-seryl-[protein] + ATP = O-phospho-L-seryl-[protein] + ADP + H(+). The enzyme catalyses L-threonyl-[protein] + ATP = O-phospho-L-threonyl-[protein] + ADP + H(+). The catalysed reaction is L-tyrosyl-[protein] + ATP = O-phospho-L-tyrosyl-[protein] + ADP + H(+). Functionally, catalyzes the concomitant phosphorylation of a threonine and a tyrosine residue in a Thr-Glu-Tyr sequence located in MAP kinases. Activates the ERK1 and ERK2 MAP kinases. Activates BRAF in a KSR1 or KSR2-dependent manner; by binding to KSR1 or KSR2 releases the inhibitory intramolecular interaction between KSR1 or KSR2 protein kinase and N-terminal domains which promotes KSR1 or KSR2-BRAF dimerization and BRAF activation. In Rattus norvegicus (Rat), this protein is Dual specificity mitogen-activated protein kinase kinase 2 (Map2k2).